The primary structure comprises 298 residues: Protein RKD2 (298 aa).

Basic and acidic residues-rich tracts occupy residues 1–10 (MADHTTKEQK) and 81–102 (EQNR…VKET). Disordered regions lie at residues 1–22 (MADH…PSFD) and 73–112 (SSAS…NERH). The region spanning 121–203 (SDITTYTTSS…KMEGEENAEK (83 aa)) is the RWP-RK domain. The stretch at 188 to 222 (NVKELQKMEGEENAEKLQDALEMLEKEKRTIEDLP) forms a coiled coil. The segment at 241–279 (NHKRKKKRSLKSDQSQVPSCSSSGSVPSDESVDEAGMES) is disordered. Positions 252 to 269 (SDQSQVPSCSSSGSVPSD) are enriched in low complexity. The span at 270 to 279 (ESVDEAGMES) shows a compositional bias: acidic residues.

The protein resides in the nucleus. In terms of biological role, putative transcription factor. The protein is Protein RKD2 (RKD2) of Arabidopsis thaliana (Mouse-ear cress).